Reading from the N-terminus, the 195-residue chain is Protein hunchback (195 aa).

Disordered regions lie at residues 16 to 57 (SHHH…SHTN), 64 to 83 (LKQQ…QQPM), and 155 to 195 (LTPP…KYMA). A compositionally biased stretch (basic residues) spans 17 to 29 (HHHHHHHAHHSHH). Low complexity-rich tracts occupy residues 33–44 (SNSNSNASSPHQ) and 66–81 (QQQQ…QQQQ). Basic and acidic residues predominate over residues 176–195 (EPEKEHDLMSNSSEDMKYMA).

Belongs to the hunchback C2H2-type zinc-finger protein family.

Its subcellular location is the nucleus. Functionally, gap class segmentation protein that controls development of head structures. The chain is Protein hunchback (hb) from Drosophila dasycnemia (Fruit fly).